Reading from the N-terminus, the 180-residue chain is uncharacterized protein (180 aa).

An N-terminal signal peptide occupies residues 1–22; the sequence is MKLRFISSALAAALFAATGSYA. A disulfide bridge connects residues Cys-41 and Cys-81.

It belongs to the fimbrial protein family.

It localises to the fimbrium. This is an uncharacterized protein from Escherichia coli O157:H7.